Here is a 494-residue protein sequence, read N- to C-terminus: MTTPSLSSILRHTRPIFKETLRAARPTLQNALPNGFRIASESKDGDTCTVGVWIDAGSRWETEKNNGVAHFLEHMNFKGTGKRSRQDIEFGMEKMGAHLNAYTSREHTCYYVKCFKKDVPEAVDILADILLNSKRTEQDLDAERQTIVQEKEDVEARIDEVLMDHLHSAAFEGSGLGLSILGPLENIQKSITKGMIDDFVKTHYTGPRMALVGSGAVDHGQLCDLASKYFGALPTGQPKPSGFTRFLGGDKRETNQLNPLTHVAVAFQTPGISHPDAIKIKVLEQLLGSYSRDKGEAAYSCFARAIVMDFYDPKVGQFFRPNKAGHNPIHSLNAFWAPYSDVGLLGFYAIAEPGKSYGHEWENILHYAMRELIRVSRNISEEEFERAKNQLKLQTMLQLDGTTNIADDIGRQVLSFGARVPLASFFEQLDAISREDLIRVGPRVLLRQGPRGGGDWRHGQRARVRRPAGGDLLRGPLSCPLCTPLPRQSVVCMA.

Position 70 (histidine 70) interacts with Zn(2+). The active-site Proton acceptor is the glutamate 73. Zn(2+) contacts are provided by histidine 74 and glutamate 150.

It belongs to the peptidase M16 family. UQCRC1/QCR1 subfamily. Component of the ubiquinol-cytochrome c oxidoreductase (cytochrome b-c1 complex, complex III, CIII), a multisubunit enzyme composed of 10 subunits. The complex is composed of 3 respiratory subunits cytochrome b, cytochrome c1 and Rieske protein, 2 core protein subunits, and additional low-molecular weight protein subunits. The complex exists as an obligatory dimer and forms supercomplexes (SCs) in the inner mitochondrial membrane with cytochrome c oxidase (complex IV, CIV). The cofactor is Zn(2+). Post-translationally, the N-terminus is blocked.

It is found in the mitochondrion inner membrane. Component of the ubiquinol-cytochrome c oxidoreductase, a multisubunit transmembrane complex that is part of the mitochondrial electron transport chain which drives oxidative phosphorylation. The respiratory chain contains 3 multisubunit complexes succinate dehydrogenase (complex II, CII), ubiquinol-cytochrome c oxidoreductase (cytochrome b-c1 complex, complex III, CIII) and cytochrome c oxidase (complex IV, CIV), that cooperate to transfer electrons derived from NADH and succinate to molecular oxygen, creating an electrochemical gradient over the inner membrane that drives transmembrane transport and the ATP synthase. The cytochrome b-c1 complex catalyzes electron transfer from ubiquinol to cytochrome c, linking this redox reaction to translocation of protons across the mitochondrial inner membrane, with protons being carried across the membrane as hydrogens on the quinol. In the process called Q cycle, 2 protons are consumed from the matrix, 4 protons are released into the intermembrane space and 2 electrons are passed to cytochrome c. The sequence is that of Ubiquinol-cytochrome-c reductase complex core protein I, mitochondrial from Euglena gracilis.